Here is a 548-residue protein sequence, read N- to C-terminus: DNA ligase (548 aa).

Glu-196 contacts ATP. Lys-198 functions as the N6-AMP-lysine intermediate in the catalytic mechanism. ATP-binding residues include Arg-203, Arg-218, Glu-250, and Phe-284. Glu-250 serves as a coordination point for a divalent metal cation. Glu-345 is a binding site for a divalent metal cation. The ATP site is built by Arg-361 and Lys-365. Positions 515-548 (EQLIRNSQENTKKTFARLATTYDGPSPNKKLKLN) are disordered.

It belongs to the ATP-dependent DNA ligase family. It depends on a divalent metal cation as a cofactor.

The catalysed reaction is ATP + (deoxyribonucleotide)n-3'-hydroxyl + 5'-phospho-(deoxyribonucleotide)m = (deoxyribonucleotide)n+m + AMP + diphosphate.. Able to ligate a double-stranded synthetic DNA substrate containing a single nick and inefficiently ligated a 1 nucleotide gap but did not ligate a 2 nucleotide gap. It is able to ligate short, complementary overhangs but not blunt-ended double-stranded DNA. May be implicated in DNA repair and recombination. This Lepidoptera (butterflies and moths) protein is DNA ligase (LIG).